A 547-amino-acid polypeptide reads, in one-letter code: Chaperonin GroEL (547 aa).

ATP contacts are provided by residues 30 to 33, K51, 87 to 91, G415, and D496; these read TLGP and DGTTT.

It belongs to the chaperonin (HSP60) family. In terms of assembly, forms a cylinder of 14 subunits composed of two heptameric rings stacked back-to-back. Interacts with the co-chaperonin GroES.

It localises to the cytoplasm. The catalysed reaction is ATP + H2O + a folded polypeptide = ADP + phosphate + an unfolded polypeptide.. Functionally, together with its co-chaperonin GroES, plays an essential role in assisting protein folding. The GroEL-GroES system forms a nano-cage that allows encapsulation of the non-native substrate proteins and provides a physical environment optimized to promote and accelerate protein folding. This Chlorobaculum parvum (strain DSM 263 / NCIMB 8327) (Chlorobium vibrioforme subsp. thiosulfatophilum) protein is Chaperonin GroEL.